Consider the following 361-residue polypeptide: Cytosolic Fe-S cluster assembly factor CFD1 (361 aa).

37 to 44 (GKGGVGKS) serves as a coordination point for ATP. [4Fe-4S] cluster-binding residues include C218 and C221. The interval 293-314 (HSQSAAAQLPNSGDTESLTPAG) is disordered.

It belongs to the Mrp/NBP35 ATP-binding proteins family. NUBP2/CFD1 subfamily. As to quaternary structure, heterotetramer of 2 NBP35 and 2 CFD1 chains. Requires [4Fe-4S] cluster as cofactor.

It is found in the cytoplasm. Its function is as follows. Component of the cytosolic iron-sulfur (Fe/S) protein assembly (CIA) machinery. Required for maturation of extramitochondrial Fe-S proteins. The NBP35-CFD1 heterotetramer forms a Fe-S scaffold complex, mediating the de novo assembly of an Fe-S cluster and its transfer to target apoproteins. This Mycosarcoma maydis (Corn smut fungus) protein is Cytosolic Fe-S cluster assembly factor CFD1.